The primary structure comprises 147 residues: Flagellar assembly factor FliW (147 aa).

It belongs to the FliW family. Interacts with translational regulator CsrA and flagellin(s).

It is found in the cytoplasm. Acts as an anti-CsrA protein, binds CsrA and prevents it from repressing translation of its target genes, one of which is flagellin. Binds to flagellin and participates in the assembly of the flagellum. In Treponema denticola (strain ATCC 35405 / DSM 14222 / CIP 103919 / JCM 8153 / KCTC 15104), this protein is Flagellar assembly factor FliW.